Reading from the N-terminus, the 361-residue chain is Peptide chain release factor 1 (361 aa).

Q235 bears the N5-methylglutamine mark. The interval 286–305 (IDSARSAERKQKVGSGDRSE) is disordered.

It belongs to the prokaryotic/mitochondrial release factor family. Methylated by PrmC. Methylation increases the termination efficiency of RF1.

The protein resides in the cytoplasm. Its function is as follows. Peptide chain release factor 1 directs the termination of translation in response to the peptide chain termination codons UAG and UAA. The chain is Peptide chain release factor 1 from Rhodopseudomonas palustris (strain HaA2).